Here is a 264-residue protein sequence, read N- to C-terminus: tRNA (guanine-N(1)-)-methyltransferase (264 aa).

S-adenosyl-L-methionine is bound by residues G120 and 140 to 145 (IGDYVL).

This sequence belongs to the RNA methyltransferase TrmD family. Homodimer.

Its subcellular location is the cytoplasm. The catalysed reaction is guanosine(37) in tRNA + S-adenosyl-L-methionine = N(1)-methylguanosine(37) in tRNA + S-adenosyl-L-homocysteine + H(+). Functionally, specifically methylates guanosine-37 in various tRNAs. The protein is tRNA (guanine-N(1)-)-methyltransferase of Halorhodospira halophila (strain DSM 244 / SL1) (Ectothiorhodospira halophila (strain DSM 244 / SL1)).